A 347-amino-acid chain; its full sequence is UPF0284 protein YN1551_0030 (347 aa).

This sequence belongs to the UPF0284 family.

In Saccharolobus islandicus (strain Y.N.15.51 / Yellowstone #2) (Sulfolobus islandicus), this protein is UPF0284 protein YN1551_0030.